The sequence spans 288 residues: METSLRRAAAPAGAVAERTVLRNGGTVRDAVAVEEPLEIRVDGDRLATTMRTPGADGDLALGFLFAEGIISGVEDVGTVIHCGRPGEEGYGNVMDVRSAAGMRIDPERILEGRRFVPVSAACGVCGRLSIDHLMERIRTLPAGEPVAPALVAAGMEILARSQPVFERTGGLHAAVLVGRDGAPIASAEDVGRHNAVDKVVGAALRAGRVGPRAAAGPAPALLAVSGRAGFEIVQKAAAAGVPVIASVSAPSSLAVDLARAAGVTLCGFVRGERMNVYANGERLGLTGP.

C122 functions as the Cysteine persulfide intermediate in the catalytic mechanism. Mo-bis(molybdopterin guanine dinucleotide) is bound at residue 268-273 (FVRGER).

The protein belongs to the FdhD family.

The protein resides in the cytoplasm. Its function is as follows. Required for formate dehydrogenase (FDH) activity. Acts as a sulfur carrier protein that transfers sulfur from IscS to the molybdenum cofactor prior to its insertion into FDH. This is Sulfur carrier protein FdhD from Anaeromyxobacter sp. (strain K).